Reading from the N-terminus, the 284-residue chain is Tropomyosin Per a 7.0103 (284 aa).

Positions 1 to 266 form a coiled coil; sequence MDAIKKKMQA…EDELVHEKEK (266 aa).

It belongs to the tropomyosin family. As to quaternary structure, homodimer.

Functionally, tropomyosin, in association with the troponin complex, plays a central role in the calcium dependent regulation of muscle contraction. This is Tropomyosin Per a 7.0103 from Periplaneta americana (American cockroach).